A 426-amino-acid polypeptide reads, in one-letter code: 3-phosphoshikimate 1-carboxyvinyltransferase (426 aa).

Residues Lys21, Ser22, and Arg26 each contribute to the 3-phosphoshikimate site. Lys21 is a binding site for phosphoenolpyruvate. Positions 92 and 122 each coordinate phosphoenolpyruvate. Ser167, Ser168, Gln169, Ser195, Asp315, and Lys342 together coordinate 3-phosphoshikimate. Gln169 contacts phosphoenolpyruvate. Asp315 serves as the catalytic Proton acceptor. 2 residues coordinate phosphoenolpyruvate: Arg346 and Arg386.

It belongs to the EPSP synthase family. In terms of assembly, monomer.

It is found in the cytoplasm. The catalysed reaction is 3-phosphoshikimate + phosphoenolpyruvate = 5-O-(1-carboxyvinyl)-3-phosphoshikimate + phosphate. It functions in the pathway metabolic intermediate biosynthesis; chorismate biosynthesis. Its function is as follows. Catalyzes the transfer of the enolpyruvyl moiety of phosphoenolpyruvate (PEP) to the 5-hydroxyl of shikimate-3-phosphate (S3P) to produce enolpyruvyl shikimate-3-phosphate and inorganic phosphate. This Methanosphaera stadtmanae (strain ATCC 43021 / DSM 3091 / JCM 11832 / MCB-3) protein is 3-phosphoshikimate 1-carboxyvinyltransferase.